A 245-amino-acid chain; its full sequence is 4-hydroxy-tetrahydrodipicolinate reductase (245 aa).

Residues 7–12 (GAKGKV), Asp33, 75–77 (GTT), and 102–105 (APNF) each bind NAD(+). His132 functions as the Proton donor/acceptor in the catalytic mechanism. (S)-2,3,4,5-tetrahydrodipicolinate is bound at residue His133. The active-site Proton donor is the Lys136. 142–143 (GT) serves as a coordination point for (S)-2,3,4,5-tetrahydrodipicolinate.

It belongs to the DapB family.

It is found in the cytoplasm. The catalysed reaction is (S)-2,3,4,5-tetrahydrodipicolinate + NAD(+) + H2O = (2S,4S)-4-hydroxy-2,3,4,5-tetrahydrodipicolinate + NADH + H(+). It catalyses the reaction (S)-2,3,4,5-tetrahydrodipicolinate + NADP(+) + H2O = (2S,4S)-4-hydroxy-2,3,4,5-tetrahydrodipicolinate + NADPH + H(+). It functions in the pathway amino-acid biosynthesis; L-lysine biosynthesis via DAP pathway; (S)-tetrahydrodipicolinate from L-aspartate: step 4/4. In terms of biological role, catalyzes the conversion of 4-hydroxy-tetrahydrodipicolinate (HTPA) to tetrahydrodipicolinate. This Mycolicibacterium paratuberculosis (strain ATCC BAA-968 / K-10) (Mycobacterium paratuberculosis) protein is 4-hydroxy-tetrahydrodipicolinate reductase.